An 809-amino-acid chain; its full sequence is Eukaryotic translation initiation factor 3 subunit C (809 aa).

Residues 1-102 form a disordered region; the sequence is MSRFFAASYE…DSDESDEASK (102 aa). Composition is skewed to acidic residues over residues 18–30 and 37–59; these read SEED…EEEL and SEEE…DSDD. Residues 605 to 780 form the PCI domain; sequence FHEHINLDLI…SVLSIAKGAE (176 aa).

It belongs to the eIF-3 subunit C family. In terms of assembly, component of the eukaryotic translation initiation factor 3 (eIF-3) complex.

Its subcellular location is the cytoplasm. In terms of biological role, component of the eukaryotic translation initiation factor 3 (eIF-3) complex, which is involved in protein synthesis of a specialized repertoire of mRNAs and, together with other initiation factors, stimulates binding of mRNA and methionyl-tRNAi to the 40S ribosome. The eIF-3 complex specifically targets and initiates translation of a subset of mRNAs involved in cell proliferation. The protein is Eukaryotic translation initiation factor 3 subunit C of Vanderwaltozyma polyspora (strain ATCC 22028 / DSM 70294 / BCRC 21397 / CBS 2163 / NBRC 10782 / NRRL Y-8283 / UCD 57-17) (Kluyveromyces polysporus).